Here is a 131-residue protein sequence, read N- to C-terminus: uncharacterized protein (131 aa).

The next 2 helical transmembrane spans lie at 5-25 and 34-54; these read VQPI…YVLV and MAVT…YVMN. The tract at residues 62–131 is disordered; sequence AAFKKAAKQS…KNKKKNRALF (70 aa). Composition is skewed to basic residues over residues 66 to 92 and 122 to 131; these read KAAK…RVSH and KNKKKNRALF.

Its subcellular location is the cell membrane. This is an uncharacterized protein from Bacillus subtilis (strain 168).